The following is a 251-amino-acid chain: 3-dehydroquinate dehydratase (251 aa).

3-dehydroquinate contacts are provided by residues Glu47–Arg49 and Arg83. His144 (proton donor/acceptor) is an active-site residue. Residue Lys171 is the Schiff-base intermediate with substrate of the active site. The 3-dehydroquinate site is built by Arg214, Ser233, and Gln237.

This sequence belongs to the type-I 3-dehydroquinase family. As to quaternary structure, homodimer.

The enzyme catalyses 3-dehydroquinate = 3-dehydroshikimate + H2O. Its pathway is metabolic intermediate biosynthesis; chorismate biosynthesis; chorismate from D-erythrose 4-phosphate and phosphoenolpyruvate: step 3/7. Involved in the third step of the chorismate pathway, which leads to the biosynthesis of aromatic amino acids. Catalyzes the cis-dehydration of 3-dehydroquinate (DHQ) and introduces the first double bond of the aromatic ring to yield 3-dehydroshikimate. The protein is 3-dehydroquinate dehydratase of Klebsiella pneumoniae subsp. pneumoniae (strain ATCC 700721 / MGH 78578).